The sequence spans 73 residues: MDEKRFLKRFTESDLVPQPRSRFLRVECVDCGNEQIIFGNASTEVKCHICGRTLAKPTGGKAKILTKIKEVLE.

Zn(2+) contacts are provided by C28, C31, C47, and C50. A C4-type zinc finger spans residues 28–50 (CVDCGNEQIIFGNASTEVKCHIC).

It belongs to the eukaryotic ribosomal protein eS27 family. In terms of assembly, part of the 30S ribosomal subunit. Zn(2+) serves as cofactor.

This Methanopyrus kandleri (strain AV19 / DSM 6324 / JCM 9639 / NBRC 100938) protein is Small ribosomal subunit protein eS27.